A 438-amino-acid polypeptide reads, in one-letter code: Methylenetetrahydrofolate--tRNA-(uracil-5-)-methyltransferase TrmFO 2 (438 aa).

9–14 (GAGLAG) is a binding site for FAD.

This sequence belongs to the MnmG family. TrmFO subfamily. FAD is required as a cofactor.

Its subcellular location is the cytoplasm. It catalyses the reaction uridine(54) in tRNA + (6R)-5,10-methylene-5,6,7,8-tetrahydrofolate + NADH + H(+) = 5-methyluridine(54) in tRNA + (6S)-5,6,7,8-tetrahydrofolate + NAD(+). The catalysed reaction is uridine(54) in tRNA + (6R)-5,10-methylene-5,6,7,8-tetrahydrofolate + NADPH + H(+) = 5-methyluridine(54) in tRNA + (6S)-5,6,7,8-tetrahydrofolate + NADP(+). In terms of biological role, catalyzes the folate-dependent formation of 5-methyl-uridine at position 54 (M-5-U54) in all tRNAs. The protein is Methylenetetrahydrofolate--tRNA-(uracil-5-)-methyltransferase TrmFO 2 of Mycoplasma mycoides subsp. mycoides SC (strain CCUG 32753 / NCTC 10114 / PG1).